The sequence spans 295 residues: Bifunctional protein FolD (295 aa).

Residues 165–167 (GRS), Ser-190, and Ile-231 each bind NADP(+).

This sequence belongs to the tetrahydrofolate dehydrogenase/cyclohydrolase family. As to quaternary structure, homodimer.

It catalyses the reaction (6R)-5,10-methylene-5,6,7,8-tetrahydrofolate + NADP(+) = (6R)-5,10-methenyltetrahydrofolate + NADPH. It carries out the reaction (6R)-5,10-methenyltetrahydrofolate + H2O = (6R)-10-formyltetrahydrofolate + H(+). It participates in one-carbon metabolism; tetrahydrofolate interconversion. Catalyzes the oxidation of 5,10-methylenetetrahydrofolate to 5,10-methenyltetrahydrofolate and then the hydrolysis of 5,10-methenyltetrahydrofolate to 10-formyltetrahydrofolate. The chain is Bifunctional protein FolD from Nitrosomonas europaea (strain ATCC 19718 / CIP 103999 / KCTC 2705 / NBRC 14298).